A 364-amino-acid polypeptide reads, in one-letter code: tRNA/tmRNA (uracil-C(5))-methyltransferase (364 aa).

S-adenosyl-L-methionine contacts are provided by glutamine 188, tyrosine 216, asparagine 221, glutamate 237, and aspartate 297. Residue cysteine 322 is the Nucleophile of the active site. Catalysis depends on glutamate 356, which acts as the Proton acceptor.

Belongs to the class I-like SAM-binding methyltransferase superfamily. RNA M5U methyltransferase family. TrmA subfamily.

It catalyses the reaction uridine(54) in tRNA + S-adenosyl-L-methionine = 5-methyluridine(54) in tRNA + S-adenosyl-L-homocysteine + H(+). The catalysed reaction is uridine(341) in tmRNA + S-adenosyl-L-methionine = 5-methyluridine(341) in tmRNA + S-adenosyl-L-homocysteine + H(+). In terms of biological role, dual-specificity methyltransferase that catalyzes the formation of 5-methyluridine at position 54 (m5U54) in all tRNAs, and that of position 341 (m5U341) in tmRNA (transfer-mRNA). This is tRNA/tmRNA (uracil-C(5))-methyltransferase from Teredinibacter turnerae (strain ATCC 39867 / T7901).